Consider the following 239-residue polypeptide: Type II restriction enzyme Eco47II (239 aa).

The catalysed reaction is Endonucleolytic cleavage of DNA to give specific double-stranded fragments with terminal 5'-phosphates.. In terms of biological role, a P subtype restriction enzyme that recognizes the double-stranded sequence 5'-GGNCC-3'; the cleavage site is unknown. In Escherichia coli, this protein is Type II restriction enzyme Eco47II.